The following is a 530-amino-acid chain: Protein P80 (530 aa).

The signal sequence occupies residues 1 to 22; sequence MKVISGLLFFILISCSLFLVQG. The chain crosses the membrane as a helical span at residues 491–511; that stretch reads MLVAMTFNVALFFAVIAGVLV.

The protein belongs to the SLC31A transporter family.

The protein resides in the late endosome membrane. The polypeptide is Protein P80 (p80) (Dictyostelium discoideum (Social amoeba)).